The sequence spans 323 residues: Probable inactive poly [ADP-ribose] polymerase SRO2 (323 aa).

A PARP catalytic domain is found at 31–257; that stretch reads SSVSHAGSSF…FASRPSSPWV (227 aa). The RST domain maps to 250–321; sequence SRPSSPWVSF…IKNHKNRNKV (72 aa).

Interacts with STO.

It is found in the nucleus. Probable inactive ADP-ribosyltransferase that may be involved in stress and developmental responses. The sequence is that of Probable inactive poly [ADP-ribose] polymerase SRO2 (SRO2) from Arabidopsis thaliana (Mouse-ear cress).